The chain runs to 190 residues: Prostaglandin-H2 D-isomerase (190 aa).

A signal peptide spans 1–22 (MATHHTLWMGLALLGVLGDLQA). Serine 29 carries O-linked (GalNAc...) serine glycosylation. The N-linked (GlcNAc...) (complex) asparagine glycan is linked to asparagine 51. Catalysis depends on cysteine 65, which acts as the Nucleophile. N-linked (GlcNAc...) (complex) asparagine glycosylation is present at asparagine 78. Cysteine 89 and cysteine 186 are oxidised to a cystine.

Belongs to the calycin superfamily. Lipocalin family. As to quaternary structure, monomer. N- and O-glycosylated. Both N-glycosylation recognition sites are almost quantitatively occupied by N-glycans of the biantennary complex type, with a considerable proportion of structures bearing a bisecting GlcNAc. N-glycan at Asn-78: dHex1Hex5HexNAc4. Agalacto structure as well as sialylated and nonsialylated oligosaccharides bearing alpha2-3- and/or alpha2-6-linked NeuNAc are present. In terms of tissue distribution, abundant in the brain and CNS, where it is expressed in tissues of the blood-brain barrier and secreted into the cerebro-spinal fluid. Abundantly expressed in the heart. In the male reproductive system, it is expressed in the testis, epididymis and prostate, and is secreted into the seminal fluid. Expressed in the eye and secreted into the aqueous humor. Lower levels detected in various tissue fluids such as serum, normal urine, ascitic fluid and tear fluid. Also found in a number of other organs including ovary, fimbriae of the fallopian tubes, kidney, leukocytes.

The protein localises to the rough endoplasmic reticulum. Its subcellular location is the nucleus membrane. It is found in the golgi apparatus. It localises to the cytoplasm. The protein resides in the perinuclear region. The protein localises to the secreted. It catalyses the reaction prostaglandin H2 = prostaglandin D2. Functionally, catalyzes the conversion of PGH2 to PGD2, a prostaglandin involved in smooth muscle contraction/relaxation and a potent inhibitor of platelet aggregation. Involved in a variety of CNS functions, such as sedation, NREM sleep and PGE2-induced allodynia, and may have an anti-apoptotic role in oligodendrocytes. Binds small non-substrate lipophilic molecules, including biliverdin, bilirubin, retinal, retinoic acid and thyroid hormone, and may act as a scavenger for harmful hydrophobic molecules and as a secretory retinoid and thyroid hormone transporter. Possibly involved in development and maintenance of the blood-brain, blood-retina, blood-aqueous humor and blood-testis barrier. It is likely to play important roles in both maturation and maintenance of the central nervous system and male reproductive system. Involved in PLA2G3-dependent maturation of mast cells. PLA2G3 is secreted by immature mast cells and acts on nearby fibroblasts upstream to PTDGS to synthesize PGD2, which in turn promotes mast cell maturation and degranulation via PTGDR. In Homo sapiens (Human), this protein is Prostaglandin-H2 D-isomerase (PTGDS).